The primary structure comprises 496 residues: Catalase-A (496 aa).

Residues histidine 54 and asparagine 128 contribute to the active site. Residue tyrosine 338 coordinates heme. The Microbody targeting signal signature appears at 494-496 (SNL).

It belongs to the catalase family. Heme serves as cofactor.

Its subcellular location is the peroxisome matrix. The enzyme catalyses 2 H2O2 = O2 + 2 H2O. Catalyzes the degradation of hydrogen peroxide (H(2)O(2)) generated by peroxisomal oxidases to water and oxygen, thereby protecting cells from the toxic effects of hydrogen peroxide. The sequence is that of Catalase-A (catA) from Dictyostelium discoideum (Social amoeba).